A 536-amino-acid polypeptide reads, in one-letter code: Cytochrome P450 78A7 (536 aa).

The chain crosses the membrane as a helical span at residues 36 to 56 (LFLAVVFLSIVTWALAGGGGV). Cysteine 481 provides a ligand contact to heme.

It belongs to the cytochrome P450 family. The cofactor is heme.

It is found in the membrane. Functionally, functions probably in association with CYP78A5 in regulating relative growth of the shoot apical meristem and plant organs via a non-cell-autonomous signal. The chain is Cytochrome P450 78A7 (CYP78A7) from Arabidopsis thaliana (Mouse-ear cress).